Consider the following 683-residue polypeptide: Boron transporter 4 (683 aa).

Over 1-38 (MEEERVDSSKRLFRGIVADLRGRALCYKEDWVAGLRSG) the chain is Cytoplasmic. The chain crosses the membrane as a helical span at residues 39–59 (FGILAPTTYIFFASALPVIAF). Residues 60-80 (GEQLSRDTEGALSTVETLAST) lie on the Extracellular side of the membrane. A helical transmembrane segment spans residues 81–101 (ALCGVIHSILGGQPLLILGVA). The Cytoplasmic portion of the chain corresponds to 102 to 126 (EPTVLMYVYLYNFAIGRPELGKQLY). The helical transmembrane segment at 127 to 147 (LAWAAWVCVWTALLLFVMAIL) threads the bilayer. Topologically, residues 148–160 (NTADIINRFTRVA) are extracellular. A helical transmembrane segment spans residues 161–181 (GELFGMLISVLFIQQAIKGMV). The Cytoplasmic portion of the chain corresponds to 182-200 (SEFGMPKDEDSKLEKYKFE). Residues 201–221 (WLYTNGLLGLIFTFGLLYTAL) traverse the membrane as a helical segment. Residues 222–238 (KSRKARSWRYGTGWYRS) lie on the Extracellular side of the membrane. Residues 239 to 259 (FIADYGVPLMVVVWTALSFST) form a helical membrane-spanning segment. Topologically, residues 260–294 (PSKLPSGVPRRLFSPLPWDSPSLSHWTVIKDMGKV) are cytoplasmic. Residues 295 to 315 (SPGYIFAAFIPALMIAGLYFF) traverse the membrane as a helical segment. Topologically, residues 316 to 335 (DHSVASQLAQQKEFNLKKPS) are extracellular. The helical transmembrane segment at 336–356 (AYHYDILLLGFMTLICGLLGL) threads the bilayer. Residues 357–477 (PPSNGVLPQS…EQRVSNLLQS (121 aa)) are Cytoplasmic-facing. A helical membrane pass occupies residues 478 to 498 (LLVAGAVLAMPAIKLIPTSIL). The Extracellular portion of the chain corresponds to 499–565 (WGYFAYMAID…QIFYFGLCYG (67 aa)). A helical membrane pass occupies residues 566–586 (VTWIPVAGIMFPVPFFLLIAI). Residues 587–683 (RQYILPKLFN…GDGDMSTTRE (97 aa)) are Cytoplasmic-facing. Disordered regions lie at residues 617 to 638 (NPLELSFRSNDSKRGVQEGDAE) and 661 to 683 (KGNQIYPKEKVKAGDGDMSTTRE).

It belongs to the anion exchanger (TC 2.A.31.3) family. As to expression, expressed in the distal sides of epidermal cells in the elongation zone of roots.

It is found in the membrane. In terms of biological role, efflux-type boron transporter polarly localized in roots. Boron is essential for maintaining the integrity of plants cell walls. The protein is Boron transporter 4 (BOR4) of Arabidopsis thaliana (Mouse-ear cress).